The primary structure comprises 305 residues: MSSLVTQIDLDKINHSQSTVKDYILLMKPRVMSLVMFTGFVGMWLAPYSVHPFIAVIVLACISLGAGSAGAINMWYDRDIDSLMKRTQKRPLVRGAIEPDEALSFGLITGFFAVFFMALCVNLLASFLLLFTIFYYICIYTIWLKRRSIQNIVIGGVSGALPPVIGYAAVSNTISLESIILFLIIFIWTPPHSWALALFCNDDYKNCKVPMMPTVKGILYTKEQILIYSILLFLVSLMPFFIGMNNFIYLIIAGMLGLVFLYYSGSLFYDTPDNKQAKRLFAYSIFYLFFIFLLLSSTSTISNIS.

Helical transmembrane passes span 31 to 51, 52 to 72, 102 to 119, 123 to 145, 151 to 171, 179 to 199, 218 to 238, 240 to 260, and 281 to 301; these read VMSL…YSVH, PFIA…AGAI, ALSF…FMAL, LLAS…IWLK, NIVI…AAVS, IILF…LALF, ILYT…VSLM, FFIG…GLVF, and FAYS…TSTI.

Belongs to the UbiA prenyltransferase family. Protoheme IX farnesyltransferase subfamily.

The protein resides in the cell inner membrane. It carries out the reaction heme b + (2E,6E)-farnesyl diphosphate + H2O = Fe(II)-heme o + diphosphate. Its pathway is porphyrin-containing compound metabolism; heme O biosynthesis; heme O from protoheme: step 1/1. Its function is as follows. Converts heme B (protoheme IX) to heme O by substitution of the vinyl group on carbon 2 of heme B porphyrin ring with a hydroxyethyl farnesyl side group. In Rickettsia akari (strain Hartford), this protein is Protoheme IX farnesyltransferase.